Here is a 207-residue protein sequence, read N- to C-terminus: Large ribosomal subunit protein uL4 (207 aa).

A disordered region spans residues 49–75 (HAVKNRSAVSGGGRKPWKQKGTGRARA).

It belongs to the universal ribosomal protein uL4 family. Part of the 50S ribosomal subunit.

Functionally, one of the primary rRNA binding proteins, this protein initially binds near the 5'-end of the 23S rRNA. It is important during the early stages of 50S assembly. It makes multiple contacts with different domains of the 23S rRNA in the assembled 50S subunit and ribosome. Its function is as follows. Forms part of the polypeptide exit tunnel. This chain is Large ribosomal subunit protein uL4, found in Leuconostoc mesenteroides subsp. mesenteroides (strain ATCC 8293 / DSM 20343 / BCRC 11652 / CCM 1803 / JCM 6124 / NCDO 523 / NBRC 100496 / NCIMB 8023 / NCTC 12954 / NRRL B-1118 / 37Y).